The chain runs to 438 residues: Glutamyl-tRNA reductase (438 aa).

Residues 49-52, Ser-109, 114-116, and Gln-120 contribute to the substrate site; these read TCNR and EGQ. Cys-50 (nucleophile) is an active-site residue. Residue 197-202 participates in NADP(+) binding; sequence GAGKMS.

Belongs to the glutamyl-tRNA reductase family. Homodimer.

The enzyme catalyses (S)-4-amino-5-oxopentanoate + tRNA(Glu) + NADP(+) = L-glutamyl-tRNA(Glu) + NADPH + H(+). The protein operates within porphyrin-containing compound metabolism; protoporphyrin-IX biosynthesis; 5-aminolevulinate from L-glutamyl-tRNA(Glu): step 1/2. It functions in the pathway porphyrin-containing compound metabolism; chlorophyll biosynthesis. Catalyzes the NADPH-dependent reduction of glutamyl-tRNA(Glu) to glutamate 1-semialdehyde (GSA). The protein is Glutamyl-tRNA reductase of Synechococcus elongatus (strain ATCC 33912 / PCC 7942 / FACHB-805) (Anacystis nidulans R2).